The sequence spans 151 residues: Cytochrome c oxidase-assembly factor COX23, mitochondrial (151 aa).

The transit peptide at 1–10 (MEKPSPTRRQ) directs the protein to the mitochondrion. Residues 1-86 (MEKPSPTRRQ…QYYPDDPENP (86 aa)) form a disordered region. Residues 7–18 (TRRQTSSLSTIS) are compositionally biased toward polar residues. Residues 19-51 (NGMTMTNDNRDTTNTNSGSTSSNNSQPSSSSTP) are compositionally biased toward low complexity. Residues 101–143 (YDPCEESSKLSFQCLERNDYDRSKCQEYFDAYRECKKQWLTAR) enclose the CHCH domain. 2 consecutive short sequence motifs (cx9C motif) follow at residues 104–114 (CEESSKLSFQC) and 125–135 (CQEYFDAYREC). Disulfide bonds link Cys104/Cys135 and Cys114/Cys125.

This sequence belongs to the COX23 family.

It is found in the cytoplasm. The protein resides in the mitochondrion intermembrane space. Functionally, required for the assembly of cytochrome c oxidase. The sequence is that of Cytochrome c oxidase-assembly factor COX23, mitochondrial (COX23) from Saccharomyces cerevisiae (strain ATCC 204508 / S288c) (Baker's yeast).